The following is a 201-amino-acid chain: Transcriptional regulator GfcR (201 aa).

The protein belongs to the purine/pyrimidine phosphoribosyltransferase family. GfcR subfamily.

This is Transcriptional regulator GfcR from Methanobrevibacter smithii (strain ATCC 35061 / DSM 861 / OCM 144 / PS).